A 78-amino-acid polypeptide reads, in one-letter code: Large ribosomal subunit protein bL28 (78 aa).

The protein belongs to the bacterial ribosomal protein bL28 family.

This chain is Large ribosomal subunit protein bL28, found in Klebsiella pneumoniae (strain 342).